The primary structure comprises 575 residues: 5-aminolevulinate synthase, mitochondrial (575 aa).

The N-terminal 55 residues, 1–55, are a transit peptide targeting the mitochondrion; it reads MESITRVSMSVCPFVKSSSAQALRQLSKNSALTSQARQCPFMGAALNAKESTRSY. R124, S237, and K256 together coordinate substrate. Positions 289, 317, and 361 each coordinate pyridoxal 5'-phosphate. K364 is a catalytic residue. At K364 the chain carries N6-(pyridoxal phosphate)lysine. Positions 393 and 394 each coordinate pyridoxal 5'-phosphate. Substrate is bound at residue T479.

It belongs to the class-II pyridoxal-phosphate-dependent aminotransferase family. As to quaternary structure, homodimer. Pyridoxal 5'-phosphate serves as cofactor.

The protein resides in the mitochondrion matrix. The enzyme catalyses succinyl-CoA + glycine + H(+) = 5-aminolevulinate + CO2 + CoA. It functions in the pathway porphyrin-containing compound metabolism; protoporphyrin-IX biosynthesis; 5-aminolevulinate from glycine: step 1/1. Functionally, catalyzes the synthesis of 5-aminolevulinate (ALA) from succinyl-CoA and glycine, the first and rate-limiting step in heme biosynthesis. The protein is 5-aminolevulinate synthase, mitochondrial (HEM1) of Debaryomyces hansenii (strain ATCC 36239 / CBS 767 / BCRC 21394 / JCM 1990 / NBRC 0083 / IGC 2968) (Yeast).